Consider the following 106-residue polypeptide: Large ribosomal subunit protein uL23 (106 aa).

This sequence belongs to the universal ribosomal protein uL23 family. In terms of assembly, part of the 50S ribosomal subunit. Contacts protein L29, and trigger factor when it is bound to the ribosome.

In terms of biological role, one of the early assembly proteins it binds 23S rRNA. One of the proteins that surrounds the polypeptide exit tunnel on the outside of the ribosome. Forms the main docking site for trigger factor binding to the ribosome. The protein is Large ribosomal subunit protein uL23 of Neisseria meningitidis serogroup C / serotype 2a (strain ATCC 700532 / DSM 15464 / FAM18).